The primary structure comprises 523 residues: GMP synthase [glutamine-hydrolyzing] (523 aa).

The region spanning 8–205 is the Glutamine amidotransferase type-1 domain; that stretch reads KILILDFGSQ…VVKICGCERN (198 aa). The active-site Nucleophile is cysteine 85. Catalysis depends on residues histidine 179 and glutamate 181. Positions 206–398 constitute a GMPS ATP-PPase domain; it reads WTPENIIEDA…LGLPAEMLNR (193 aa). An ATP-binding site is contributed by 233–239; it reads SGGVDSS.

In terms of assembly, homodimer.

The enzyme catalyses XMP + L-glutamine + ATP + H2O = GMP + L-glutamate + AMP + diphosphate + 2 H(+). It participates in purine metabolism; GMP biosynthesis; GMP from XMP (L-Gln route): step 1/1. In terms of biological role, catalyzes the synthesis of GMP from XMP. The protein is GMP synthase [glutamine-hydrolyzing] of Pasteurella multocida (strain Pm70).